We begin with the raw amino-acid sequence, 617 residues long: Actin-binding protein (617 aa).

The ADF-H domain maps to 7 to 136 (DATTHSRDIE…DEEELLTKIS (130 aa)). Disordered stretches follow at residues 169 to 223 (PSLA…LSDN) and 325 to 574 (AEKK…GEDN). The 1-1 repeat unit spans residues 202–211 (ADDWDEPEIK). The segment at 202–600 (ADDWDEPEIK…DDDWWLGELE (399 aa)) is 3 X 10 AA approximate repeats. Composition is skewed to basic and acidic residues over residues 340-351 (EEQKPVETKTEI) and 359-375 (DEMK…KLGA). Over residues 400 to 411 (TFGQPAANSKPA) the composition is skewed to polar residues. Composition is skewed to acidic residues over residues 437–453 (EHEE…DEDE), 483–502 (EPVE…EEEA), and 516–530 (PEPE…EEEA). 4 repeat units span residues 444–453 (DDDWGEDEDE), 495–510 (EEEE…LPSR), 523–538 (EEEE…LPSR), and 591–600 (DDDWWLGELE). The interval 495–538 (EEEEEEEAPAPSLPSRNAAPEPEPEQPQEEEEEEEAPAPSLPSR) is 2 X 16 AA repeats of E(7)-A-P-A-P-S-L-P-S-R. An SH3 domain is found at 557–617 (AEAPWATAEY…FPSNYVVLGN (61 aa)).

The protein resides in the cytoplasm. The protein localises to the cytoskeleton. May be involved in the spatial organization of cell surface growth. An overproduction of ABP1 causes the assembly of the cortical actin skeleton at inappropriate sites on the cell surface, resulting in delocalized surface growth. This is Actin-binding protein (ABP1) from Maudiozyma exigua (Yeast).